A 259-amino-acid polypeptide reads, in one-letter code: Proteasome assembly chaperone 2 (259 aa).

This sequence belongs to the PSMG2 family. In terms of assembly, forms a heterodimer with psmg1. Post-translationally, degraded by the proteasome upon completion of 20S proteasome maturation.

It localises to the nucleus. Its function is as follows. Chaperone protein which promotes assembly of the 20S proteasome as part of a heterodimer with psmg1. This is Proteasome assembly chaperone 2 from Xenopus laevis (African clawed frog).